A 310-amino-acid chain; its full sequence is tRNA-cytidine(32) 2-sulfurtransferase (310 aa).

A PP-loop motif motif is present at residues 48–53; sequence SGGKDS. [4Fe-4S] cluster is bound by residues Cys-123, Cys-126, and Cys-214.

It belongs to the TtcA family. In terms of assembly, homodimer. Requires Mg(2+) as cofactor. [4Fe-4S] cluster serves as cofactor.

The protein localises to the cytoplasm. It catalyses the reaction cytidine(32) in tRNA + S-sulfanyl-L-cysteinyl-[cysteine desulfurase] + AH2 + ATP = 2-thiocytidine(32) in tRNA + L-cysteinyl-[cysteine desulfurase] + A + AMP + diphosphate + H(+). It participates in tRNA modification. Its function is as follows. Catalyzes the ATP-dependent 2-thiolation of cytidine in position 32 of tRNA, to form 2-thiocytidine (s(2)C32). The sulfur atoms are provided by the cysteine/cysteine desulfurase (IscS) system. The protein is tRNA-cytidine(32) 2-sulfurtransferase of Vibrio vulnificus (strain CMCP6).